Reading from the N-terminus, the 483-residue chain is ATP synthase subunit beta (483 aa).

169–176 (GGAGVGKT) contacts ATP.

Belongs to the ATPase alpha/beta chains family. In terms of assembly, F-type ATPases have 2 components, CF(1) - the catalytic core - and CF(0) - the membrane proton channel. CF(1) has five subunits: alpha(3), beta(3), gamma(1), delta(1), epsilon(1). CF(0) has three main subunits: a(1), b(2) and c(9-12). The alpha and beta chains form an alternating ring which encloses part of the gamma chain. CF(1) is attached to CF(0) by a central stalk formed by the gamma and epsilon chains, while a peripheral stalk is formed by the delta and b chains.

The protein localises to the cell membrane. It catalyses the reaction ATP + H2O + 4 H(+)(in) = ADP + phosphate + 5 H(+)(out). Its function is as follows. Produces ATP from ADP in the presence of a proton gradient across the membrane. The catalytic sites are hosted primarily by the beta subunits. The protein is ATP synthase subunit beta of Rhodococcus opacus (strain B4).